Reading from the N-terminus, the 183-residue chain is Negative modulator of initiation of replication (183 aa).

Positions Arg118 to Tyr122 are interaction with DNA.

This sequence belongs to the SeqA family. As to quaternary structure, homodimer. Polymerizes to form helical filaments.

It localises to the cytoplasm. Its function is as follows. Negative regulator of replication initiation, which contributes to regulation of DNA replication and ensures that replication initiation occurs exactly once per chromosome per cell cycle. Binds to pairs of hemimethylated GATC sequences in the oriC region, thus preventing assembly of replication proteins and re-initiation at newly replicated origins. Repression is relieved when the region becomes fully methylated. This chain is Negative modulator of initiation of replication, found in Proteus mirabilis (strain HI4320).